Reading from the N-terminus, the 441-residue chain is Xaa-Pro dipeptidase (441 aa).

Positions 244, 255, 336, 381, and 420 each coordinate Mn(2+).

Belongs to the peptidase M24B family. Bacterial-type prolidase subfamily. Mn(2+) is required as a cofactor.

The catalysed reaction is Xaa-L-Pro dipeptide + H2O = an L-alpha-amino acid + L-proline. In terms of biological role, splits dipeptides with a prolyl residue in the C-terminal position. In Xanthomonas campestris pv. campestris (strain B100), this protein is Xaa-Pro dipeptidase.